Reading from the N-terminus, the 252-residue chain is 14-3-3-like protein GF14 omicron (252 aa).

A phosphoserine mark is found at Ser-65 and Ser-188.

The protein belongs to the 14-3-3 family.

The protein resides in the nucleus. Its subcellular location is the cytoplasm. Its function is as follows. Is associated with a DNA binding complex that binds to the G box, a well-characterized cis-acting DNA regulatory element found in plant genes. The chain is 14-3-3-like protein GF14 omicron (GRF11) from Arabidopsis thaliana (Mouse-ear cress).